A 218-amino-acid polypeptide reads, in one-letter code: 3-isopropylmalate dehydratase small subunit (218 aa).

The protein belongs to the LeuD family. LeuD type 1 subfamily. In terms of assembly, heterodimer of LeuC and LeuD.

It catalyses the reaction (2R,3S)-3-isopropylmalate = (2S)-2-isopropylmalate. It functions in the pathway amino-acid biosynthesis; L-leucine biosynthesis; L-leucine from 3-methyl-2-oxobutanoate: step 2/4. Functionally, catalyzes the isomerization between 2-isopropylmalate and 3-isopropylmalate, via the formation of 2-isopropylmaleate. This chain is 3-isopropylmalate dehydratase small subunit, found in Alkalilimnicola ehrlichii (strain ATCC BAA-1101 / DSM 17681 / MLHE-1).